The sequence spans 247 residues: Neurotrophic factor BDNF precursor form (247 aa).

The first 18 residues, 1–18 (MTILFLTMVISYFGCMKA), serve as a signal peptide directing secretion. A propeptide spanning residues 19 to 128 (APMKEANARG…AANMSMRVRR (110 aa)) is cleaved from the precursor. Asn-121 carries an N-linked (GlcNAc...) asparagine glycan. Disulfide bonds link Cys-141-Cys-208, Cys-186-Cys-237, and Cys-196-Cys-239.

It belongs to the NGF-beta family. Monomers and homodimers. Binds to NTRK2/TRKB. Can form heterodimers with other neurotrophin family members, such as NTF3 and NTF4 (in vitro), but the physiological relevance of this is not clear. BDNF precursor form: interacts with the heterodimer formed by NGFR and SORCS2. Mature BDNF has much lower affinity for the heterodimer formed by NGFR and SORCS2. N-glycosylated and glycosulfated, contrary to mature BDNF. In terms of processing, mature BDNF is produced by proteolytic removal of the propeptide, catalyzed by a FURIN family member. In addition, the precursor form is proteolytically cleaved within the propeptide, but this is not an obligatory intermediate for the production of mature BDNF. Can be converted into mature BDNF by plasmin (PLG).

The protein resides in the secreted. Important signaling molecule that activates signaling cascades downstream of NTRK2. During development, promotes the survival and differentiation of selected neuronal populations of the peripheral and central nervous systems. Participates in axonal growth, pathfinding and in the modulation of dendritic growth and morphology. Major regulator of synaptic transmission and plasticity at adult synapses in many regions of the CNS. The versatility of BDNF is emphasized by its contribution to a range of adaptive neuronal responses including long-term potentiation (LTP), long-term depression (LTD), certain forms of short-term synaptic plasticity, as well as homeostatic regulation of intrinsic neuronal excitability. Functionally, important signaling molecule that activates signaling cascades downstream of NTRK2. Activates signaling cascades via the heterodimeric receptor formed by NGFR and SORCS2. Signaling via NGFR and SORCS2 plays a role in synaptic plasticity and long-term depression (LTD). Binding to NGFR and SORCS2 promotes neuronal apoptosis. Promotes neuronal growth cone collapse. This is Neurotrophic factor BDNF precursor form (BDNF) from Equus caballus (Horse).